Reading from the N-terminus, the 129-residue chain is Phosphoribosyl-AMP cyclohydrolase (129 aa).

D76 contacts Mg(2+). C77 contacts Zn(2+). Positions 78 and 80 each coordinate Mg(2+). Positions 97 and 104 each coordinate Zn(2+).

This sequence belongs to the PRA-CH family. Homodimer. The cofactor is Mg(2+). It depends on Zn(2+) as a cofactor.

Its subcellular location is the cytoplasm. The catalysed reaction is 1-(5-phospho-beta-D-ribosyl)-5'-AMP + H2O = 1-(5-phospho-beta-D-ribosyl)-5-[(5-phospho-beta-D-ribosylamino)methylideneamino]imidazole-4-carboxamide. It functions in the pathway amino-acid biosynthesis; L-histidine biosynthesis; L-histidine from 5-phospho-alpha-D-ribose 1-diphosphate: step 3/9. Catalyzes the hydrolysis of the adenine ring of phosphoribosyl-AMP. The sequence is that of Phosphoribosyl-AMP cyclohydrolase from Leptothrix cholodnii (strain ATCC 51168 / LMG 8142 / SP-6) (Leptothrix discophora (strain SP-6)).